The primary structure comprises 207 residues: Outer-membrane lipoprotein LolB (207 aa).

The signal sequence occupies residues 1–21 (MTLPDFRLIRLLPLASLVLTA). The N-palmitoyl cysteine moiety is linked to residue Cys-22. Cys-22 carries S-diacylglycerol cysteine lipidation.

This sequence belongs to the LolB family. In terms of assembly, monomer.

It is found in the cell outer membrane. Its function is as follows. Plays a critical role in the incorporation of lipoproteins in the outer membrane after they are released by the LolA protein. The protein is Outer-membrane lipoprotein LolB of Salmonella typhi.